The chain runs to 337 residues: MTQVFQGRSFLAEKDFTRAELEYLIDFSAHLKDLKKRGVPHHYLEGKNIALLFEKTSTRTRSAFTTAAIDLGAHPEYLGANDIQLGKKESTEDTAKVLGRMFDGIEFRGFSQRKVEELAEFSGVPVWNGLTDEWHPTQMLADFLTVKENFGKLEGLTLVYCGDGRNNMANSLLVTGAILGVNVRIFSPKELFPADDIVKLAESYAKESGAKLLITEDADEAVRGADVLYTDVWVSMGEESKFEERVKLLKPYQVNMELIKKAGNENLIFLHCLPAFHDTNTVYGKDIEEKFGVKEMEVTDEVFRSSYARQFDQAENRMHTIKAVMAATLGNLFIPKV.

Carbamoyl phosphate contacts are provided by residues Ser57–Thr60, Gln84, Arg108, and His135–Gln138. L-ornithine is bound by residues Asn167, Asp231, and Ser235–Met236. Carbamoyl phosphate-binding positions include Cys272–Leu273 and Arg317.

It belongs to the aspartate/ornithine carbamoyltransferase superfamily. OTCase family.

The protein localises to the cytoplasm. It catalyses the reaction carbamoyl phosphate + L-ornithine = L-citrulline + phosphate + H(+). It functions in the pathway amino-acid degradation; L-arginine degradation via ADI pathway; carbamoyl phosphate from L-arginine: step 2/2. Its function is as follows. Reversibly catalyzes the transfer of the carbamoyl group from carbamoyl phosphate (CP) to the N(epsilon) atom of ornithine (ORN) to produce L-citrulline. This Streptococcus ratti protein is Ornithine carbamoyltransferase, catabolic.